The chain runs to 443 residues: MSEMTPREIVSELDKHIIGQDNAKRSVAIALRNRWRRMQLNEELRHEVTPKNILMIGPTGVGKTEIARRLAKLANAPFIKVEATKFTEVGYVGKEVDSIIRDLTDAAVKMVRVQAIEKNRYRAEELAEERILDVLIPPAKNNWGQTEQQQEPSAARQAFRKKLREGQLDDKEIEIDLAAAPMGVEIMAPPGMEEMTSQLQSMFQNLGGQKQKARKLKIKDAMKLLIEEEAAKLVNPEELKQDAIDAVEQHGIVFIDEIDKICKRGESSGPDVSREGVQRDLLPLVEGCTVSTKHGMVKTDHILFIASGAFQIAKPSDLIPELQGRLPIRVELQALTTSDFERILTEPNASITVQYKALMATEGVNIEFTDSGIKRIAEAAWQVNESTENIGARRLHTVLERLMEEISYDASDLSGQNITIDADYVSKRLDALVADEDLSRFIL.

ATP is bound by residues isoleucine 18, 60 to 65, aspartate 256, glutamate 321, and arginine 393; that span reads GVGKTE.

The protein belongs to the ClpX chaperone family. HslU subfamily. As to quaternary structure, a double ring-shaped homohexamer of HslV is capped on each side by a ring-shaped HslU homohexamer. The assembly of the HslU/HslV complex is dependent on binding of ATP.

Its subcellular location is the cytoplasm. ATPase subunit of a proteasome-like degradation complex; this subunit has chaperone activity. The binding of ATP and its subsequent hydrolysis by HslU are essential for unfolding of protein substrates subsequently hydrolyzed by HslV. HslU recognizes the N-terminal part of its protein substrates and unfolds these before they are guided to HslV for hydrolysis. The sequence is that of ATP-dependent protease ATPase subunit HslU from Shigella boydii serotype 18 (strain CDC 3083-94 / BS512).